A 377-amino-acid chain; its full sequence is Sodium-dependent organic anion transporter (377 aa).

Over 1-29 (MRANCSSGLACPANSSEEELPEGLKAFGN) the chain is Extracellular. An N-linked (GlcNAc...) asparagine glycan is attached at Asn-4. The chain crosses the membrane as a helical span at residues 30 to 50 (LDLVFTVVSALMIGLLMFSLG). The Cytoplasmic segment spans residues 51 to 67 (CSVEVQKLWGHIRRPWG). The chain crosses the membrane as a helical span at residues 68-88 (IAVGMLCQFGLMPLIAYLLII). Over 89-97 (SFSLKPLQA) the chain is Extracellular. The helical transmembrane segment at 98–118 (IAVLIMGCCPGGTVSNIFTFW) threads the bilayer. The Cytoplasmic segment spans residues 119–133 (VDGDMDLSISMTTCS). A helical transmembrane segment spans residues 134–154 (TMAALGMMPLCLYLYTLSWNL). The Extracellular portion of the chain corresponds to 155-159 (EQNLT). Residue Asn-157 is glycosylated (N-linked (GlcNAc...) asparagine). Residues 160 to 180 (IPYQNIGITLVCLIIPVAFGI) form a helical membrane-spanning segment. The Cytoplasmic portion of the chain corresponds to 181–195 (YVNYRWPKQSKIILK). A helical transmembrane segment spans residues 196 to 216 (IGAIAGGLLFLVVTGAGMVLM). The Extracellular portion of the chain corresponds to 217–223 (KEFWSSD). A helical membrane pass occupies residues 224 to 244 (IILLMISFIFPLIGHATGFLL). The Cytoplasmic portion of the chain corresponds to 245 to 257 (ALLTHQSWQRCRT). Residues 258 to 278 (ISLETGTQNVQMCFTMLQLSF) traverse the membrane as a helical segment. Residues 279 to 285 (TAEQLVQ) lie on the Extracellular side of the membrane. Residues 286–306 (IFGFVLAYGLFQMLNGFFMVA) traverse the membrane as a helical segment. Over 307–377 (AYKMYKRRLK…TPTGDIARAK (71 aa)) the chain is Cytoplasmic. A disordered region spans residues 319–377 (HGNEKPSCQEARHRKKSTSPKETTAFLEVNEEATLSPGPSGPVDPHGAPTPTGDIARAK).

The protein belongs to the bile acid:sodium symporter (BASS) (TC 2.A.28) family. In terms of processing, glycosylated.

Its subcellular location is the membrane. The catalysed reaction is estrone 3-sulfate(out) + 2 Na(+)(out) = estrone 3-sulfate(in) + 2 Na(+)(in). It carries out the reaction 17beta-estradiol 3-sulfate(out) + 2 Na(+)(out) = 17beta-estradiol 3-sulfate(in) + 2 Na(+)(in). It catalyses the reaction dehydroepiandrosterone 3-sulfate(out) + 2 Na(+)(out) = dehydroepiandrosterone 3-sulfate(in) + 2 Na(+)(in). The enzyme catalyses androst-5-ene-diol 3-sulfate(out) + 2 Na(+)(out) = androst-5-ene-diol 3-sulfate(in) + 2 Na(+)(in). The catalysed reaction is pregnenolone sulfate(out) + 2 Na(+)(out) = pregnenolone sulfate(in) + 2 Na(+)(in). It carries out the reaction taurolithocholate 3-sulfate(out) + 2 Na(+)(out) = taurolithocholate 3-sulfate(in) + 2 Na(+)(in). It catalyses the reaction androsterone 3alpha-sulfate(out) + 2 Na(+)(out) = androsterone 3alpha-sulfate(in) + 2 Na(+)(in). The enzyme catalyses 5alpha-dihydrotestosterone sulfate(out) + 2 Na(+)(out) = 5alpha-dihydrotestosterone sulfate(in) + 2 Na(+)(in). The catalysed reaction is 17beta-estradiol 17-sulfate(out) + 2 Na(+)(out) = 17beta-estradiol 17-sulfate(in) + 2 Na(+)(in). It carries out the reaction 17alpha-hydroxypregnenolone 3-sulfate(out) + 2 Na(+)(out) = 17alpha-hydroxypregnenolone 3-sulfate(in) + 2 Na(+)(in). It catalyses the reaction epiandrosterone 3-sulfate(out) + 2 Na(+)(out) = epiandrosterone 3-sulfate(in) + 2 Na(+)(in). The enzyme catalyses epitestosterone 17-sulfate(out) + 2 Na(+)(out) = epitestosterone 17-sulfate(in) + 2 Na(+)(in). The catalysed reaction is testosterone 17-sulfate(out) + 2 Na(+)(out) = testosterone 17-sulfate(in) + 2 Na(+)(in). It carries out the reaction 16alpha-hydroxydehydroepiandrosterone 3-sulfate(out) + 2 Na(+)(out) = 16alpha-hydroxydehydroepiandrosterone 3-sulfate(in) + 2 Na(+)(in). Functionally, transports sulfoconjugated steroid hormones from the extracellular compartment into the cytosol in a sodium-dependent manner without hydrolysis. Steroid sulfate hormones are commonly considered to be biologically inactive metabolites, that may be activated by steroid sulfatases into free steroids. May play an important role by delivering sulfoconjugated steroids to specific target cells in reproductive organs. May play a role transporting the estriol precursor 16alpha-hydroxydehydroepiandrosterone 3-sulfate (16a-OH-DHEAS) at the fetal blood vessel endothelium. Can also transport other sulfoconjugated molecules such as taurolithocholic acid-3-sulfate and sulfoconjugated pyrenes. The sequence is that of Sodium-dependent organic anion transporter (SLC10A6) from Bos taurus (Bovine).